Consider the following 1407-residue polypeptide: Enhancer of mRNA-decapping protein 4 (1407 aa).

Ala2 bears the N-acetylalanine mark. Residues Ser3 and Ser6 each carry the phosphoserine modification. Lys125 is modified (N6-acetyllysine). WD repeat units follow at residues 174 to 214, 230 to 277, 295 to 334, and 342 to 393; these read GFTG…GKIQ, NHFR…SSHS, GHST…QDEP, and PHDG…CLQT. A disordered region spans residues 547 to 566; sequence GESRPELGSEGLASAPHGSQ. 4 positions are modified to phosphoserine: Ser560, Ser565, Ser583, and Ser585. Disordered regions lie at residues 604–632 and 673–745; these read SLQQ…SSSS and SSSS…STAL. Low complexity-rich tracts occupy residues 609-632 and 673-693; these read SASP…SSSS and SSSS…LPGP. Residues Ser681, Ser713, Ser728, and Ser730 each carry the phosphoserine modification. The segment covering 727-745 has biased composition (polar residues); it reads ASPSRTRSPDVISSASTAL. Residue Thr732 is modified to Phosphothreonine. Ser734 and Ser746 each carry phosphoserine. Residues 787 to 817 are disordered; it reads PRPRQGPELSSQLGLDGGPGDGDRHSTPSLL. Position 827 is a phosphothreonine (Thr827). Ser850 and Ser877 each carry phosphoserine. The segment at 875–951 is disordered; the sequence is HDSQDTSAEQ…SRLTEHQVVE (77 aa). At Thr880 the chain carries Phosphothreonine. Ser881, Ser885, Ser893, Ser896, and Ser898 each carry phosphoserine. Thr907 is modified (phosphothreonine). Residues 972–1031 are a coiled coil; that stretch reads HNQEELLQRLCAQLEGLQSTVTDHVERALETRHEQEQRRLERALAEGQQRGGQLQEQLTQ. At Ser1386 the chain carries Phosphoserine.

This sequence belongs to the WD repeat EDC4 family. In terms of assembly, part of a decapping complex consisting of DCP1A, DCP2, EDC3, EDC4 and probably DDX6. Part of a complex consisting of DCP1A, EDC3, EDC4 and DDX6. Part of a complex consisting of DCP1B, EDC3, EDC4 and DDX6. Interacts with DCP2. Interacts with NBDY. Interacts with Tex19.1. Interacts with LSM14A. Interacts with DDX6.

Its subcellular location is the cytoplasm. It is found in the P-body. The protein resides in the nucleus. In the process of mRNA degradation, seems to play a role in mRNA decapping. Component of a complex containing DCP2 and DCP1A which functions in decapping of ARE-containing mRNAs. Promotes complex formation between DCP1A and DCP2. Enhances the catalytic activity of DCP2 (in vitro). This chain is Enhancer of mRNA-decapping protein 4 (Edc4), found in Rattus norvegicus (Rat).